The primary structure comprises 556 residues: Formate--tetrahydrofolate ligase (556 aa).

ATP is bound at residue 64-71 (TPAGEGKT).

The protein belongs to the formate--tetrahydrofolate ligase family.

It carries out the reaction (6S)-5,6,7,8-tetrahydrofolate + formate + ATP = (6R)-10-formyltetrahydrofolate + ADP + phosphate. It participates in one-carbon metabolism; tetrahydrofolate interconversion. The chain is Formate--tetrahydrofolate ligase from Haemophilus ducreyi (strain 35000HP / ATCC 700724).